Reading from the N-terminus, the 156-residue chain is Small ribosomal subunit protein uS7 (156 aa).

The protein belongs to the universal ribosomal protein uS7 family. In terms of assembly, part of the 30S ribosomal subunit. Contacts proteins S9 and S11.

In terms of biological role, one of the primary rRNA binding proteins, it binds directly to 16S rRNA where it nucleates assembly of the head domain of the 30S subunit. Is located at the subunit interface close to the decoding center, probably blocks exit of the E-site tRNA. This is Small ribosomal subunit protein uS7 from Mycobacterium tuberculosis (strain CDC 1551 / Oshkosh).